The sequence spans 328 residues: Phosphate acyltransferase (328 aa).

The protein belongs to the PlsX family. As to quaternary structure, homodimer. Probably interacts with PlsY.

The protein resides in the cytoplasm. It carries out the reaction a fatty acyl-[ACP] + phosphate = an acyl phosphate + holo-[ACP]. It participates in lipid metabolism; phospholipid metabolism. Its function is as follows. Catalyzes the reversible formation of acyl-phosphate (acyl-PO(4)) from acyl-[acyl-carrier-protein] (acyl-ACP). This enzyme utilizes acyl-ACP as fatty acyl donor, but not acyl-CoA. The sequence is that of Phosphate acyltransferase from Mycoplasma pneumoniae (strain ATCC 29342 / M129 / Subtype 1) (Mycoplasmoides pneumoniae).